Reading from the N-terminus, the 257-residue chain is Snake venom serine protease CL5 (257 aa).

A signal peptide spans 1–18 (MVLIRVLANLLILQLSYA). A propeptide spanning residues 19 to 24 (QRSSEL) is cleaved from the precursor. In terms of domain architecture, Peptidase S1 spans 25-248 (VIGGDECNIN…HLDWIQSIIA (224 aa)). 5 disulfide bridges follow: cysteine 31–cysteine 162, cysteine 49–cysteine 65, cysteine 141–cysteine 209, cysteine 173–cysteine 188, and cysteine 199–cysteine 224. Histidine 64 acts as the Charge relay system in catalysis. N-linked (GlcNAc...) asparagine glycans are attached at residues asparagine 78 and asparagine 102. Aspartate 109 acts as the Charge relay system in catalysis. N-linked (GlcNAc...) asparagine glycans are attached at residues asparagine 153 and asparagine 169. The Charge relay system role is filled by serine 203. N-linked (GlcNAc...) asparagine glycosylation occurs at asparagine 250.

It belongs to the peptidase S1 family. Snake venom subfamily. As to quaternary structure, monomer. In terms of tissue distribution, expressed by the venom gland.

The protein resides in the secreted. Snake venom serine protease that may act in the hemostasis system of the prey. The polypeptide is Snake venom serine protease CL5 (Trimeresurus stejnegeri (Chinese green tree viper)).